The primary structure comprises 294 residues: Phosphatidylserine decarboxylase proenzyme (294 aa).

Catalysis depends on charge relay system; for autoendoproteolytic cleavage activity residues D113, H169, and S256. S256 serves as the catalytic Schiff-base intermediate with substrate; via pyruvic acid; for decarboxylase activity. Residue S256 is modified to Pyruvic acid (Ser); by autocatalysis.

Belongs to the phosphatidylserine decarboxylase family. PSD-B subfamily. Prokaryotic type II sub-subfamily. As to quaternary structure, heterodimer of a large membrane-associated beta subunit and a small pyruvoyl-containing alpha subunit. The cofactor is pyruvate. Post-translationally, is synthesized initially as an inactive proenzyme. Formation of the active enzyme involves a self-maturation process in which the active site pyruvoyl group is generated from an internal serine residue via an autocatalytic post-translational modification. Two non-identical subunits are generated from the proenzyme in this reaction, and the pyruvate is formed at the N-terminus of the alpha chain, which is derived from the carboxyl end of the proenzyme. The autoendoproteolytic cleavage occurs by a canonical serine protease mechanism, in which the side chain hydroxyl group of the serine supplies its oxygen atom to form the C-terminus of the beta chain, while the remainder of the serine residue undergoes an oxidative deamination to produce ammonia and the pyruvoyl prosthetic group on the alpha chain. During this reaction, the Ser that is part of the protease active site of the proenzyme becomes the pyruvoyl prosthetic group, which constitutes an essential element of the active site of the mature decarboxylase.

It is found in the cell membrane. The catalysed reaction is a 1,2-diacyl-sn-glycero-3-phospho-L-serine + H(+) = a 1,2-diacyl-sn-glycero-3-phosphoethanolamine + CO2. Its pathway is phospholipid metabolism; phosphatidylethanolamine biosynthesis; phosphatidylethanolamine from CDP-diacylglycerol: step 2/2. Functionally, catalyzes the formation of phosphatidylethanolamine (PtdEtn) from phosphatidylserine (PtdSer). This chain is Phosphatidylserine decarboxylase proenzyme, found in Clostridium perfringens (strain ATCC 13124 / DSM 756 / JCM 1290 / NCIMB 6125 / NCTC 8237 / Type A).